We begin with the raw amino-acid sequence, 152 residues long: MIILKKKLAGVSEQSLSLFLTRARKAAGVRGQVQVLVTSSDELRGLNRRFRRKDKATDVLSFPAIVDGEAGDIAISSDIASEYAYELGHSLDEELRILILHGVLHLAGHDHERDKGEMEALESELRDKLKLPSSLIERTTKPAKKAAKRKKR.

3 residues coordinate Zn(2+): H101, H105, and H111. The tract at residues 132–152 (PSSLIERTTKPAKKAAKRKKR) is disordered. Over residues 141–152 (KPAKKAAKRKKR) the composition is skewed to basic residues.

This sequence belongs to the endoribonuclease YbeY family. The cofactor is Zn(2+).

The protein localises to the cytoplasm. In terms of biological role, single strand-specific metallo-endoribonuclease involved in late-stage 70S ribosome quality control and in maturation of the 3' terminus of the 16S rRNA. This is Endoribonuclease YbeY from Koribacter versatilis (strain Ellin345).